The following is a 726-amino-acid chain: Procollagen-lysine,2-oxoglutarate 5-dioxygenase 1 (726 aa).

An N-terminal signal peptide occupies residues methionine 1–threonine 18. 2 N-linked (GlcNAc...) asparagine glycosylation sites follow: asparagine 196 and asparagine 537. Positions glutamine 635–proline 726 constitute a Fe2OG dioxygenase domain. Positions 655 and 657 each coordinate Fe cation. Asparagine 685 is a glycosylation site (N-linked (GlcNAc...) asparagine). Histidine 707 is a Fe cation binding site. The active site involves arginine 717.

As to quaternary structure, homodimer. Identified in a complex with P3H3 and P3H4. Fe(2+) is required as a cofactor. It depends on L-ascorbate as a cofactor.

It is found in the rough endoplasmic reticulum membrane. The enzyme catalyses L-lysyl-[collagen] + 2-oxoglutarate + O2 = (5R)-5-hydroxy-L-lysyl-[collagen] + succinate + CO2. In terms of biological role, part of a complex composed of PLOD1, P3H3 and P3H4 that catalyzes hydroxylation of lysine residues in collagen alpha chains and is required for normal assembly and cross-linkling of collagen fibrils. Forms hydroxylysine residues in -Xaa-Lys-Gly- sequences in collagens. These hydroxylysines serve as sites of attachment for carbohydrate units and are essential for the stability of the intermolecular collagen cross-links. The chain is Procollagen-lysine,2-oxoglutarate 5-dioxygenase 1 (PLOD1) from Bos taurus (Bovine).